Consider the following 700-residue polypeptide: Ribonucleoside-diphosphate reductase subunit alpha (700 aa).

Substrate contacts are provided by residues threonine 153, 169-170 (SC), glycine 198, 380-384 (NLCSE), and 580-584 (PTGSI). Cysteine 170 and cysteine 409 are disulfide-bonded. Asparagine 380 functions as the Proton acceptor in the catalytic mechanism. The Cysteine radical intermediate role is filled by cysteine 382. The Proton acceptor role is filled by glutamate 384.

The protein belongs to the ribonucleoside diphosphate reductase large chain family. In terms of assembly, tetramer of two alpha and two beta subunits.

The catalysed reaction is a 2'-deoxyribonucleoside 5'-diphosphate + [thioredoxin]-disulfide + H2O = a ribonucleoside 5'-diphosphate + [thioredoxin]-dithiol. With respect to regulation, under complex allosteric control mediated by deoxynucleoside triphosphates and ATP binding. The type of nucleotide bound at the specificity site determines substrate preference. It seems probable that ATP makes the enzyme reduce CDP and UDP, dGTP favors ADP reduction and dTTP favors GDP reduction. Its function is as follows. Provides the precursors necessary for DNA synthesis. Catalyzes the biosynthesis of deoxyribonucleotides from the corresponding ribonucleotides. The sequence is that of Ribonucleoside-diphosphate reductase subunit alpha from Bacillus subtilis (strain 168).